Reading from the N-terminus, the 376-residue chain is Alanine racemase (376 aa).

K40 acts as the Proton acceptor; specific for D-alanine in catalysis. N6-(pyridoxal phosphate)lysine is present on K40. A substrate-binding site is contributed by R138. Y270 (proton acceptor; specific for L-alanine) is an active-site residue. M317 serves as a coordination point for substrate.

It belongs to the alanine racemase family. The cofactor is pyridoxal 5'-phosphate.

The enzyme catalyses L-alanine = D-alanine. It participates in amino-acid biosynthesis; D-alanine biosynthesis; D-alanine from L-alanine: step 1/1. Functionally, catalyzes the interconversion of L-alanine and D-alanine. May also act on other amino acids. This Lactobacillus gasseri (strain ATCC 33323 / DSM 20243 / BCRC 14619 / CIP 102991 / JCM 1131 / KCTC 3163 / NCIMB 11718 / NCTC 13722 / AM63) protein is Alanine racemase (alr).